Consider the following 109-residue polypeptide: Large ribosomal subunit protein uL22 (109 aa).

It belongs to the universal ribosomal protein uL22 family. In terms of assembly, part of the 50S ribosomal subunit.

This protein binds specifically to 23S rRNA; its binding is stimulated by other ribosomal proteins, e.g. L4, L17, and L20. It is important during the early stages of 50S assembly. It makes multiple contacts with different domains of the 23S rRNA in the assembled 50S subunit and ribosome. Its function is as follows. The globular domain of the protein is located near the polypeptide exit tunnel on the outside of the subunit, while an extended beta-hairpin is found that lines the wall of the exit tunnel in the center of the 70S ribosome. This is Large ribosomal subunit protein uL22 from Dehalococcoides mccartyi (strain ATCC BAA-2100 / JCM 16839 / KCTC 5957 / BAV1).